The primary structure comprises 441 residues: uncharacterized protein (441 aa).

217-224 (GETGTGKT) serves as a coordination point for ATP.

This sequence belongs to the GSP E family.

This is an uncharacterized protein from Bacillus anthracis.